The sequence spans 460 residues: Cysteine--tRNA ligase (460 aa).

Cys-29 contacts Zn(2+). The 'HIGH' region motif lies at 31–41; sequence MTIYDLCHIGH. Residues Cys-213, His-238, and Glu-242 each contribute to the Zn(2+) site. Positions 270 to 274 match the 'KMSKS' region motif; that stretch reads KMSKS. Lys-273 is a binding site for ATP.

The protein belongs to the class-I aminoacyl-tRNA synthetase family. Monomer. Requires Zn(2+) as cofactor.

It localises to the cytoplasm. The catalysed reaction is tRNA(Cys) + L-cysteine + ATP = L-cysteinyl-tRNA(Cys) + AMP + diphosphate. The protein is Cysteine--tRNA ligase of Verminephrobacter eiseniae (strain EF01-2).